We begin with the raw amino-acid sequence, 352 residues long: Quinolinate synthase (352 aa).

2 residues coordinate iminosuccinate: His-55 and Ser-72. Cys-117 serves as a coordination point for [4Fe-4S] cluster. Residues 143-145 and Ser-160 contribute to the iminosuccinate site; that span reads YVN. Cys-204 contributes to the [4Fe-4S] cluster binding site. Residues 230–232 and Thr-258 contribute to the iminosuccinate site; that span reads HPE. Position 303 (Cys-303) interacts with [4Fe-4S] cluster.

The protein belongs to the quinolinate synthase family. Type 2 subfamily. Requires [4Fe-4S] cluster as cofactor.

The protein localises to the cytoplasm. It catalyses the reaction iminosuccinate + dihydroxyacetone phosphate = quinolinate + phosphate + 2 H2O + H(+). The protein operates within cofactor biosynthesis; NAD(+) biosynthesis; quinolinate from iminoaspartate: step 1/1. Catalyzes the condensation of iminoaspartate with dihydroxyacetone phosphate to form quinolinate. The polypeptide is Quinolinate synthase (Mycobacterium leprae (strain Br4923)).